The primary structure comprises 610 residues: UvrABC system protein C (610 aa).

The GIY-YIG domain occupies 16–94 (HQPGVYRMYN…IKQYLPKYNV (79 aa)). A UVR domain is found at 204–239 (QQVLKQLIEKMEVASQQLRFEDAAKFRDQIQAIRRV).

It belongs to the UvrC family. In terms of assembly, interacts with UvrB in an incision complex.

It is found in the cytoplasm. Functionally, the UvrABC repair system catalyzes the recognition and processing of DNA lesions. UvrC both incises the 5' and 3' sides of the lesion. The N-terminal half is responsible for the 3' incision and the C-terminal half is responsible for the 5' incision. In Vibrio parahaemolyticus serotype O3:K6 (strain RIMD 2210633), this protein is UvrABC system protein C.